A 325-amino-acid polypeptide reads, in one-letter code: Pyruvate dehydrogenase E1 component subunit beta (325 aa).

A thiamine diphosphate-binding site is contributed by glutamate 60.

Heterodimer of an alpha and a beta chain. It depends on thiamine diphosphate as a cofactor.

The enzyme catalyses N(6)-[(R)-lipoyl]-L-lysyl-[protein] + pyruvate + H(+) = N(6)-[(R)-S(8)-acetyldihydrolipoyl]-L-lysyl-[protein] + CO2. The pyruvate dehydrogenase complex catalyzes the overall conversion of pyruvate to acetyl-CoA and CO(2). It contains multiple copies of three enzymatic components: pyruvate dehydrogenase (E1), dihydrolipoamide acetyltransferase (E2) and lipoamide dehydrogenase (E3). The chain is Pyruvate dehydrogenase E1 component subunit beta (pdhB) from Staphylococcus epidermidis (strain ATCC 35984 / DSM 28319 / BCRC 17069 / CCUG 31568 / BM 3577 / RP62A).